A 390-amino-acid chain; its full sequence is MYELSTLYAAFEQYFGHPPTRIARAPGRVNLIGEHTDYNDGFVFPMALDRATYVAARPRNDQIVRVFSIKFRDEDQFDLQQIVRDERRQWVNYIRGVAKGLLARDLPLRGADLMIDSDVPAGSGLSSSAALEVAVGYTFQLLNNINLLGEELALVAQGAEHTFVGVKCGIMDQLIAALGEAGHALLIDCRDLSYRPVPIPAEARVVVCDSGVRHRLAGSEYNQRRAGCEEAVRLLKPALGKIQALRDVRSSDLAMYGHLLPPDLLPLARHVVSENERTLAAAEALAAGDLVKMGQLMVASHVSLRDDYRVSVRELDTLVDLALAAPGCFGSRMTGGGFGGSTVSLVAADHVDAFVAAMVDGYAIRTGRKLQPLVCTAGAGVSCVYASEEE.

34–37 (EHTD) is a binding site for substrate. ATP contacts are provided by residues Ser68 and 122–128 (GSGLSSS). Mg(2+) contacts are provided by Ser128 and Glu160. The active-site Proton acceptor is Asp172. Tyr221 serves as a coordination point for substrate.

The protein belongs to the GHMP kinase family. GalK subfamily.

The protein resides in the cytoplasm. The enzyme catalyses alpha-D-galactose + ATP = alpha-D-galactose 1-phosphate + ADP + H(+). The protein operates within carbohydrate metabolism; galactose metabolism. Its function is as follows. Catalyzes the transfer of the gamma-phosphate of ATP to D-galactose to form alpha-D-galactose-1-phosphate (Gal-1-P). The sequence is that of Galactokinase from Chloroflexus aurantiacus (strain ATCC 29366 / DSM 635 / J-10-fl).